Reading from the N-terminus, the 107-residue chain is UPF0145 protein PM1668 (107 aa).

The protein belongs to the UPF0145 family.

This Pasteurella multocida (strain Pm70) protein is UPF0145 protein PM1668.